Here is a 114-residue protein sequence, read N- to C-terminus: MADNLSQSFDKSAMTEEERRHIKKEIRKQIVVFALMIFLTLMSFMAVATDVIPRSFAIPFIFILAVIQFALQLFFFMHMKDKDHGWANAFMISGIFITVPTIAALMLLLGVNKI.

Helical transmembrane passes span 29-49 (QIVVFALMIFLTLMSFMAVAT), 56-76 (FAIPFIFILAVIQFALQLFFF), and 89-109 (AFMISGIFITVPTIAALMLLL).

The protein belongs to the cytochrome c oxidase bacterial subunit 4 family.

It is found in the cell membrane. The catalysed reaction is 4 Fe(II)-[cytochrome c] + O2 + 8 H(+)(in) = 4 Fe(III)-[cytochrome c] + 2 H2O + 4 H(+)(out). The chain is Cytochrome c oxidase subunit 4B (ctaF) from Alkalihalophilus pseudofirmus (strain ATCC BAA-2126 / JCM 17055 / OF4) (Bacillus pseudofirmus).